The following is a 490-amino-acid chain: MFSFDALLQAIARQTVLCVGDLMLDEFVYGEVSRISPEAPAPVIAVQRSETNIGGAGNVARNIAAIGARCIFVGLIGDDATGRFLESELGSESRIEPVLVCDGSRPTTRKVRFVSEHFSTHMLRADWETASPAAADIEQRLLDAILPQLARADIVLLSDYAKGVLTARVIRDTIDAAKKLGKRVIVDPKSANFAIYRGATLLTPNRKEFTAATRSAAATDDEIAAAAQDAMALAECEAMLVTKSEHGMTLVPRGGEPIHVPALPVKVRDVSGAGDTVAAVLAVVLASGANWAAAMRAASAAAAVAVSKNGTAVVTPAELRRRILPHASLAAEEKIIGSDAELDERLKQWRREGLRVGFTNGCFDILHPGHVKVLTAARGACDRLIVGLNSDASVRRLKGESRPVQHERARAEVLAALEAVDLVAIFEEDTPLRLITRIEPSVLVKGGDYTREQVVGHEIVAAKGGDVLLVDVLPGFSTTSLVARAREGQS.

The segment at 1 to 328 (MFSFDALLQA…LRRRILPHAS (328 aa)) is ribokinase. An ATP-binding site is contributed by 205–208 (NRKE). Residue Asp-275 is part of the active site. The cytidylyltransferase stretch occupies residues 358 to 490 (FTNGCFDILH…LVARAREGQS (133 aa)).

In the N-terminal section; belongs to the carbohydrate kinase PfkB family. It in the C-terminal section; belongs to the cytidylyltransferase family. As to quaternary structure, homodimer.

The catalysed reaction is D-glycero-beta-D-manno-heptose 7-phosphate + ATP = D-glycero-beta-D-manno-heptose 1,7-bisphosphate + ADP + H(+). It catalyses the reaction D-glycero-beta-D-manno-heptose 1-phosphate + ATP + H(+) = ADP-D-glycero-beta-D-manno-heptose + diphosphate. The protein operates within nucleotide-sugar biosynthesis; ADP-L-glycero-beta-D-manno-heptose biosynthesis; ADP-L-glycero-beta-D-manno-heptose from D-glycero-beta-D-manno-heptose 7-phosphate: step 1/4. It functions in the pathway nucleotide-sugar biosynthesis; ADP-L-glycero-beta-D-manno-heptose biosynthesis; ADP-L-glycero-beta-D-manno-heptose from D-glycero-beta-D-manno-heptose 7-phosphate: step 3/4. Its function is as follows. Catalyzes the phosphorylation of D-glycero-D-manno-heptose 7-phosphate at the C-1 position to selectively form D-glycero-beta-D-manno-heptose-1,7-bisphosphate. In terms of biological role, catalyzes the ADP transfer from ATP to D-glycero-beta-D-manno-heptose 1-phosphate, yielding ADP-D-glycero-beta-D-manno-heptose. The sequence is that of Bifunctional protein HldE from Rhodopseudomonas palustris (strain TIE-1).